The chain runs to 349 residues: DNA replication and repair protein RecF (349 aa).

30–37 (GKNGSGKT) lines the ATP pocket.

The protein belongs to the RecF family.

It localises to the cytoplasm. In terms of biological role, the RecF protein is involved in DNA metabolism; it is required for DNA replication and normal SOS inducibility. RecF binds preferentially to single-stranded, linear DNA. It also seems to bind ATP. The polypeptide is DNA replication and repair protein RecF (Francisella tularensis subsp. mediasiatica (strain FSC147)).